The following is a 111-amino-acid chain: Phosphoribosyl-AMP cyclohydrolase (111 aa).

Position 80 (Asp80) interacts with Mg(2+). Cys81 provides a ligand contact to Zn(2+). Mg(2+) contacts are provided by Asp82 and Asp84. Zn(2+)-binding residues include Cys97 and Cys104.

Belongs to the PRA-CH family. In terms of assembly, homodimer. It depends on Mg(2+) as a cofactor. Requires Zn(2+) as cofactor.

It is found in the cytoplasm. The catalysed reaction is 1-(5-phospho-beta-D-ribosyl)-5'-AMP + H2O = 1-(5-phospho-beta-D-ribosyl)-5-[(5-phospho-beta-D-ribosylamino)methylideneamino]imidazole-4-carboxamide. It functions in the pathway amino-acid biosynthesis; L-histidine biosynthesis; L-histidine from 5-phospho-alpha-D-ribose 1-diphosphate: step 3/9. Catalyzes the hydrolysis of the adenine ring of phosphoribosyl-AMP. This is Phosphoribosyl-AMP cyclohydrolase from Mycobacterium marinum (strain ATCC BAA-535 / M).